A 124-amino-acid polypeptide reads, in one-letter code: Small ribosomal subunit protein eS25 (124 aa).

The segment covering 1–22 (MPPKDSKQKKDTSKAKKDKDPV) has biased composition (basic and acidic residues). The interval 1–37 (MPPKDSKQKKDTSKAKKDKDPVNKSGGKAKKKKWSKG) is disordered. Residues 27–37 (GKAKKKKWSKG) are compositionally biased toward basic residues.

This sequence belongs to the eukaryotic ribosomal protein eS25 family. In terms of assembly, component of the small ribosomal subunit.

The protein resides in the cytoplasm. In terms of biological role, component of the small ribosomal subunit. The ribosome is a large ribonucleoprotein complex responsible for the synthesis of proteins in the cell. The chain is Small ribosomal subunit protein eS25 (rps25) from Ictalurus punctatus (Channel catfish).